A 247-amino-acid polypeptide reads, in one-letter code: Probable transcriptional regulatory protein GSU1074 (247 aa).

This sequence belongs to the TACO1 family.

It is found in the cytoplasm. The sequence is that of Probable transcriptional regulatory protein GSU1074 from Geobacter sulfurreducens (strain ATCC 51573 / DSM 12127 / PCA).